Here is a 97-residue protein sequence, read N- to C-terminus: Putative regulatory protein Dole_1911 (97 aa).

This sequence belongs to the RemA family.

This is Putative regulatory protein Dole_1911 from Desulfosudis oleivorans (strain DSM 6200 / JCM 39069 / Hxd3) (Desulfococcus oleovorans).